We begin with the raw amino-acid sequence, 444 residues long: Phosphoglucosamine mutase (444 aa).

Catalysis depends on Ser101, which acts as the Phosphoserine intermediate. Mg(2+)-binding residues include Ser101, Asp240, Asp242, and Asp244. Ser101 carries the post-translational modification Phosphoserine.

This sequence belongs to the phosphohexose mutase family. The cofactor is Mg(2+). Activated by phosphorylation.

It carries out the reaction alpha-D-glucosamine 1-phosphate = D-glucosamine 6-phosphate. Catalyzes the conversion of glucosamine-6-phosphate to glucosamine-1-phosphate. This Sphingopyxis alaskensis (strain DSM 13593 / LMG 18877 / RB2256) (Sphingomonas alaskensis) protein is Phosphoglucosamine mutase.